The sequence spans 99 residues: uncharacterized protein (99 aa).

An N-terminal signal peptide occupies residues 1–19 (MLGMIRWVVEGTLVAMLLS). The segment at 71-99 (DGFGRINDSGPKRRGRDQSQYSSRFVELD) is disordered.

The protein resides in the cytoplasm. This is an uncharacterized protein from Saccharomyces cerevisiae (strain ATCC 204508 / S288c) (Baker's yeast).